A 141-amino-acid polypeptide reads, in one-letter code: MNTEKVIFNYRLKFHPKYLDSNFTSYIKNVAKEIIFKKETFYVLKIEDVEILNVIIGRGQSDHIANLKITTQSIVPQENKIFSGIVTNVFPHLKLTIVTIEGKVEVIVKGETTKQINDFALVLINVVKFHNEKIVCSGSFQ.

This is an uncharacterized protein from Acheta domesticus (House cricket).